We begin with the raw amino-acid sequence, 158 residues long: MRIGHGYDVHKLVEGRKLIMGGVDIPWEKGLLGHSDADVLLHAIADAILGALGEGDIGKHFPDTDPAYKGADSLKLLEHVANLAIAKGYCLGNLDATIIAQRPKMAPHIPAMRENIARVLRSTVDRVNVKATTEEGLSFTGRGEGISAHAVVLMIGKG.

Residues D8 and H10 each contribute to the a divalent metal cation site. Residues 8 to 10 and 34 to 35 contribute to the 4-CDP-2-C-methyl-D-erythritol 2-phosphate site; these read DVH and HS. Residue H42 coordinates a divalent metal cation. 4-CDP-2-C-methyl-D-erythritol 2-phosphate contacts are provided by residues 56 to 58, 61 to 65, 100 to 106, 132 to 135, F139, and R142; these read DIG, FPDTD, AQRPKMA, and TTEE.

Belongs to the IspF family. As to quaternary structure, homotrimer. Requires a divalent metal cation as cofactor.

It carries out the reaction 4-CDP-2-C-methyl-D-erythritol 2-phosphate = 2-C-methyl-D-erythritol 2,4-cyclic diphosphate + CMP. Its pathway is isoprenoid biosynthesis; isopentenyl diphosphate biosynthesis via DXP pathway; isopentenyl diphosphate from 1-deoxy-D-xylulose 5-phosphate: step 4/6. Involved in the biosynthesis of isopentenyl diphosphate (IPP) and dimethylallyl diphosphate (DMAPP), two major building blocks of isoprenoid compounds. Catalyzes the conversion of 4-diphosphocytidyl-2-C-methyl-D-erythritol 2-phosphate (CDP-ME2P) to 2-C-methyl-D-erythritol 2,4-cyclodiphosphate (ME-CPP) with a corresponding release of cytidine 5-monophosphate (CMP). The chain is 2-C-methyl-D-erythritol 2,4-cyclodiphosphate synthase from Pelobacter propionicus (strain DSM 2379 / NBRC 103807 / OttBd1).